The chain runs to 530 residues: Phosphoenolpyruvate carboxykinase (ATP) (530 aa).

3 residues coordinate substrate: R59, Y198, and K204. ATP-binding positions include K204, H223, and 239–247 (GLSGTGKTT). Mn(2+)-binding residues include K204 and H223. Residue D260 participates in Mn(2+) binding. ATP contacts are provided by residues E288, R325, 440–441 (RI), and T446. Substrate is bound at residue R325.

It belongs to the phosphoenolpyruvate carboxykinase (ATP) family. Requires Mn(2+) as cofactor.

It is found in the cytoplasm. The enzyme catalyses oxaloacetate + ATP = phosphoenolpyruvate + ADP + CO2. The protein operates within carbohydrate biosynthesis; gluconeogenesis. Involved in the gluconeogenesis. Catalyzes the conversion of oxaloacetate (OAA) to phosphoenolpyruvate (PEP) through direct phosphoryl transfer between the nucleoside triphosphate and OAA. In Azobacteroides pseudotrichonymphae genomovar. CFP2, this protein is Phosphoenolpyruvate carboxykinase (ATP).